The chain runs to 879 residues: Metabotropic glutamate receptor 3 (879 aa).

Positions Met-1–Gly-24 are cleaved as a signal peptide. Residues Asp-25–Ala-577 lie on the Extracellular side of the membrane. A disulfide bridge connects residues Cys-57 and Cys-99. Residues Ser-151 and Ala-172–Thr-174 each bind L-glutamate. N-linked (GlcNAc...) asparagine glycosylation is present at Asn-209. Tyr-222 contacts L-glutamate. 7 disulfide bridges follow: Cys-240–Cys-527, Cys-361–Cys-373, Cys-412–Cys-419, Cys-509–Cys-528, Cys-513–Cys-531, Cys-534–Cys-546, and Cys-549–Cys-562. Residue Asn-292 is glycosylated (N-linked (GlcNAc...) asparagine). Position 301 (Asp-301) interacts with L-glutamate. Lys-389 is a binding site for L-glutamate. 2 N-linked (GlcNAc...) asparagine glycosylation sites follow: Asn-414 and Asn-439. Residues Ile-578–Phe-598 traverse the membrane as a helical segment. Residues Ile-599 to Glu-613 lie on the Cytoplasmic side of the membrane. The chain crosses the membrane as a helical span at residues Leu-614–Ala-634. Residues Lys-635–Gln-688 lie on the Extracellular side of the membrane. Residues Val-689–Leu-709 form a helical membrane-spanning segment. Over Glu-710 to Ser-735 the chain is Cytoplasmic. Residues Ser-736–Phe-756 form a helical membrane-spanning segment. Topologically, residues Lys-757–Lys-769 are extracellular. A helical transmembrane segment spans residues Phe-770–Tyr-790. Residues Val-791 to Val-807 lie on the Cytoplasmic side of the membrane. The helical transmembrane segment at Ser-808–Phe-828 threads the bilayer. Residues Gln-829 to Leu-879 lie on the Extracellular side of the membrane.

This sequence belongs to the G-protein coupled receptor 3 family. In terms of assembly, interacts with TAMALIN.

It is found in the cell membrane. G-protein coupled receptor for glutamate. Ligand binding causes a conformation change that triggers signaling via guanine nucleotide-binding proteins (G proteins) and modulates the activity of down-stream effectors. Signaling inhibits adenylate cyclase activity. The polypeptide is Metabotropic glutamate receptor 3 (GRM3) (Macaca fascicularis (Crab-eating macaque)).